Consider the following 111-residue polypeptide: Probable 4-amino-4-deoxy-L-arabinose-phosphoundecaprenol flippase subunit ArnE (111 aa).

Helical transmembrane passes span 37 to 57 (LIWL…WLKL), 65 to 85 (QAYP…HFFF), and 91 to 111 (LQHW…GQGI).

This sequence belongs to the ArnE family. As to quaternary structure, heterodimer of ArnE and ArnF.

It localises to the cell inner membrane. It functions in the pathway bacterial outer membrane biogenesis; lipopolysaccharide biosynthesis. Its function is as follows. Translocates 4-amino-4-deoxy-L-arabinose-phosphoundecaprenol (alpha-L-Ara4N-phosphoundecaprenol) from the cytoplasmic to the periplasmic side of the inner membrane. The sequence is that of Probable 4-amino-4-deoxy-L-arabinose-phosphoundecaprenol flippase subunit ArnE from Hamiltonella defensa subsp. Acyrthosiphon pisum (strain 5AT).